A 298-amino-acid chain; its full sequence is Protoheme IX farnesyltransferase (298 aa).

Helical transmembrane passes span 16–36 (VVAL…PDMP), 45–65 (ALGF…NQLL), 93–113 (VFAG…VNVI), 114–134 (TAVL…VYLK), 141–161 (IVIG…AVTG), 172–192 (SLLV…LAIF), 223–243 (VLLA…VFYL), 244–264 (GGAI…LNPP), and 277–297 (IVYL…LPWV).

It belongs to the UbiA prenyltransferase family. Protoheme IX farnesyltransferase subfamily.

Its subcellular location is the cell inner membrane. The enzyme catalyses heme b + (2E,6E)-farnesyl diphosphate + H2O = Fe(II)-heme o + diphosphate. It participates in porphyrin-containing compound metabolism; heme O biosynthesis; heme O from protoheme: step 1/1. Functionally, converts heme B (protoheme IX) to heme O by substitution of the vinyl group on carbon 2 of heme B porphyrin ring with a hydroxyethyl farnesyl side group. This is Protoheme IX farnesyltransferase from Xanthomonas euvesicatoria pv. vesicatoria (strain 85-10) (Xanthomonas campestris pv. vesicatoria).